The sequence spans 879 residues: Alanine--tRNA ligase (879 aa).

Residues H566, H570, C668, and H672 each coordinate Zn(2+).

The protein belongs to the class-II aminoacyl-tRNA synthetase family. It depends on Zn(2+) as a cofactor.

Its subcellular location is the cytoplasm. The enzyme catalyses tRNA(Ala) + L-alanine + ATP = L-alanyl-tRNA(Ala) + AMP + diphosphate. In terms of biological role, catalyzes the attachment of alanine to tRNA(Ala) in a two-step reaction: alanine is first activated by ATP to form Ala-AMP and then transferred to the acceptor end of tRNA(Ala). Also edits incorrectly charged Ser-tRNA(Ala) and Gly-tRNA(Ala) via its editing domain. The polypeptide is Alanine--tRNA ligase (Clostridium botulinum (strain Loch Maree / Type A3)).